The primary structure comprises 240 residues: tRNA (guanine-N(1)-)-methyltransferase (240 aa).

S-adenosyl-L-methionine contacts are provided by residues Gly110 and 130-135 (IGDYVL).

Belongs to the RNA methyltransferase TrmD family. Homodimer.

Its subcellular location is the cytoplasm. The enzyme catalyses guanosine(37) in tRNA + S-adenosyl-L-methionine = N(1)-methylguanosine(37) in tRNA + S-adenosyl-L-homocysteine + H(+). In terms of biological role, specifically methylates guanosine-37 in various tRNAs. The protein is tRNA (guanine-N(1)-)-methyltransferase of Macrococcus caseolyticus (strain JCSC5402) (Macrococcoides caseolyticum).